The chain runs to 269 residues: Hydroxyethylthiazole kinase (269 aa).

Met42 is a binding site for substrate. The ATP site is built by Arg118 and Ser164. Position 191 (Gly191) interacts with substrate.

Belongs to the Thz kinase family. It depends on Mg(2+) as a cofactor.

It carries out the reaction 5-(2-hydroxyethyl)-4-methylthiazole + ATP = 4-methyl-5-(2-phosphooxyethyl)-thiazole + ADP + H(+). It functions in the pathway cofactor biosynthesis; thiamine diphosphate biosynthesis; 4-methyl-5-(2-phosphoethyl)-thiazole from 5-(2-hydroxyethyl)-4-methylthiazole: step 1/1. Functionally, catalyzes the phosphorylation of the hydroxyl group of 4-methyl-5-beta-hydroxyethylthiazole (THZ). In Listeria monocytogenes serovar 1/2a (strain ATCC BAA-679 / EGD-e), this protein is Hydroxyethylthiazole kinase.